The chain runs to 199 residues: Inactive glutathione S-transferase D3 (199 aa).

The GST N-terminal domain occupies Met-1–Asp-64. Residues His-34–Ile-36 and Glu-48–Arg-50 contribute to the glutathione site. Residues Asp-70–Lys-199 enclose the GST C-terminal domain.

It belongs to the GST superfamily. Delta family. As to quaternary structure, homodimer.

Has no glutathione S-transferase activity. The chain is Inactive glutathione S-transferase D3 from Drosophila melanogaster (Fruit fly).